Reading from the N-terminus, the 240-residue chain is Methylthioribulose-1-phosphate dehydratase (240 aa).

Cys99 serves as a coordination point for substrate. Zn(2+) contacts are provided by His116 and His118. Catalysis depends on Glu145, which acts as the Proton donor/acceptor. A Zn(2+)-binding site is contributed by His201.

Belongs to the aldolase class II family. MtnB subfamily. The cofactor is Zn(2+).

It localises to the cytoplasm. The catalysed reaction is 5-(methylsulfanyl)-D-ribulose 1-phosphate = 5-methylsulfanyl-2,3-dioxopentyl phosphate + H2O. Its pathway is amino-acid biosynthesis; L-methionine biosynthesis via salvage pathway; L-methionine from S-methyl-5-thio-alpha-D-ribose 1-phosphate: step 2/6. Its function is as follows. Catalyzes the dehydration of methylthioribulose-1-phosphate (MTRu-1-P) into 2,3-diketo-5-methylthiopentyl-1-phosphate (DK-MTP-1-P). The sequence is that of Methylthioribulose-1-phosphate dehydratase from Paracoccidioides brasiliensis (strain Pb18).